Here is a 126-residue protein sequence, read N- to C-terminus: Protein C10 (126 aa).

Position 2 is an N-acetylalanine (alanine 2).

It belongs to the UPF0456 family. In terms of tissue distribution, ubiquitously expressed, with higher expression in lung.

It localises to the cytoplasm. In terms of biological role, in brain, may be required for corpus callosum development. This is Protein C10 (Grcc10) from Mus musculus (Mouse).